The following is a 455-amino-acid chain: MTTSSRTCPVPAVNGHMTHYPAAPYPLLFPPVIGGLSLPSLHGLQSHPPTSGCSTPSPATVETQSTSSEELVPSPPSPLPPPRVYKPCFVCQDKSSGYHYGVSACEGCKGFFRRSIQKNMVYTCHRDKNCVINKVTRNRCQYCRLQKCFEVGMSKESVRNDRNKKKKEPTKQESTENYEMTAELDDLTEKIRKAHQETFPSLCQLGKYTTNSSADHRVRLDLGLWDKFSELATKCIIKIVEFAKRLPGFTSLTIADQITLLKAACLDILILRICTRYTPEQDTMTFSDGLTLNRTQMHNAGFGPLTDLVFTFANQLLPLEMDDTETGLLSAICLICGDRQDLEEPMKVDKLQEPLLEALKIYIRKRRPNKPHMFPKILMKITDLRSISAKGAERVITLKMEIPGSMPPLIQEMLENSEGHEPLTPTSNGNTAEHSPSISPSSVDNSSVSQSPMVQ.

The segment at 1–87 (MTTSSRTCPV…PLPPPRVYKP (87 aa)) is modulating. The interval 44-78 (LQSHPPTSGCSTPSPATVETQSTSSEELVPSPPSP) is disordered. A compositionally biased stretch (polar residues) spans 47–66 (HPPTSGCSTPSPATVETQST). 2 consecutive NR C4-type zinc fingers follow at residues 88-108 (CFVCQDKSSGYHYGVSACEGC) and 124-148 (CHRDKNCVINKVTRNRCQYCRLQKC). The nuclear receptor DNA-binding region spans 88-153 (CFVCQDKSSG…RLQKCFEVGM (66 aa)). Positions 154 to 182 (SKESVRNDRNKKKKEPTKQESTENYEMTA) are hinge. The NR LBD domain occupies 183–417 (ELDDLTEKIR…PLIQEMLENS (235 aa)). The disordered stretch occupies residues 416 to 455 (NSEGHEPLTPTSNGNTAEHSPSISPSSVDNSSVSQSPMVQ). Residues 424–434 (TPTSNGNTAEH) are compositionally biased toward polar residues. Positions 435–455 (SPSISPSSVDNSSVSQSPMVQ) are enriched in low complexity.

The protein belongs to the nuclear hormone receptor family. NR1 subfamily. Heterodimer; with a RXR molecule. Binds DNA preferentially as a RAR/RXR heterodimer.

The protein resides in the nucleus. Receptor for retinoic acid. Retinoic acid receptors bind as heterodimers to their target response elements in response to their ligands, all-trans or 9-cis retinoic acid, and regulate gene expression in various biological processes. The RAR/RXR heterodimers bind to the retinoic acid response elements (RARE) composed of tandem 5'-AGGTCA-3' sites known as DR1-DR5. Required for limb and craniofacial development. The protein is Retinoic acid receptor beta (RARB) of Gallus gallus (Chicken).